Reading from the N-terminus, the 197-residue chain is UPF0301 protein BAV3012 (197 aa).

The protein belongs to the UPF0301 (AlgH) family.

The protein is UPF0301 protein BAV3012 of Bordetella avium (strain 197N).